The sequence spans 209 residues: Thymidylate kinase (209 aa).

11–18 is a binding site for ATP; that stretch reads GIEGAGKT.

It belongs to the thymidylate kinase family.

The enzyme catalyses dTMP + ATP = dTDP + ADP. In terms of biological role, phosphorylation of dTMP to form dTDP in both de novo and salvage pathways of dTTP synthesis. This Pasteurella multocida (strain Pm70) protein is Thymidylate kinase (tmk).